The primary structure comprises 968 residues: Serine/threonine-protein kinase 10 (968 aa).

Phosphoserine is present on residues Ser-13 and Ser-20. In terms of domain architecture, Protein kinase spans 36-294; that stretch reads WEIVGELGDG…AAQLLEHPFV (259 aa). Residues 42-50 and Lys-65 contribute to the ATP site; that span reads LGDGAFGKV. Catalysis depends on Asp-157, which acts as the Proton acceptor. The segment at 175-224 is activation segment; the sequence is DFGVSAKNLKTLQKRDSFIGTPYWMAPEVVMCETMKDTPYDYKADIWSLG. A Phosphoserine modification is found at Ser-191. Polar residues-rich tracts occupy residues 337 to 351 and 361 to 393; these read LENH…SPPS and SPST…TTSP. Disordered stretches follow at residues 337–411 and 425–490; these read LENH…VPLR and AQEK…CSSL. A phosphoserine mark is found at Ser-438, Ser-450, Ser-454, Ser-485, Ser-514, and Ser-549. Positions 441-457 are enriched in polar residues; it reads ANRSQKASQSRPNSSAL. Residues 573–947 adopt a coiled-coil conformation; sequence QKEEHRNQTQ…FFKLSEEAEC (375 aa). Disordered stretches follow at residues 668-690, 827-865, 910-929, and 944-968; these read VEKL…HTQK, INGG…HENQ, LKEW…EDLN, and EAEC…ADAS. Positions 835–865 are enriched in basic and acidic residues; the sequence is EQREKIKQFSQQEEKRQKSERLQQQQKHENQ. Phosphothreonine is present on Thr-952.

This sequence belongs to the protein kinase superfamily. STE Ser/Thr protein kinase family. STE20 subfamily. As to quaternary structure, homodimer; homodimerization is required for activation segment autophosphorylation. In terms of processing, autophosphorylates following homodimerization, leading to activation of the protein. As to expression, highly expressed in rapidly proliferating tissues (spleen, placenta, and peripheral blood leukocytes). Also expressed in brain, heart, skeletal muscle, colon, thymus, kidney, liver, small intestine and lung.

The protein resides in the cell membrane. It carries out the reaction L-seryl-[protein] + ATP = O-phospho-L-seryl-[protein] + ADP + H(+). The enzyme catalyses L-threonyl-[protein] + ATP = O-phospho-L-threonyl-[protein] + ADP + H(+). Its activity is regulated as follows. Inhibited by the pyrrole-indolinone inhibitor SU11274 (K00593): intercalates between the ATP-binding Lys-65 and alpha-C glutamate (Glu-81), resulting in a partial disordering of the lysine side chain. Also specifically inhibited by erlotinib. Slightly inhibited by gefitinib. In terms of biological role, serine/threonine-protein kinase involved in regulation of lymphocyte migration. Phosphorylates MSN, and possibly PLK1. Involved in regulation of lymphocyte migration by mediating phosphorylation of ERM proteins such as MSN. Acts as a negative regulator of MAP3K1/MEKK1. May also act as a cell cycle regulator by acting as a polo kinase kinase: mediates phosphorylation of PLK1 in vitro; however such data require additional evidences in vivo. In Homo sapiens (Human), this protein is Serine/threonine-protein kinase 10 (STK10).